Reading from the N-terminus, the 296-residue chain is Glycine--tRNA ligase alpha subunit (296 aa).

It belongs to the class-II aminoacyl-tRNA synthetase family. Tetramer of two alpha and two beta subunits.

It localises to the cytoplasm. The catalysed reaction is tRNA(Gly) + glycine + ATP = glycyl-tRNA(Gly) + AMP + diphosphate. The chain is Glycine--tRNA ligase alpha subunit from Prochlorococcus marinus (strain SARG / CCMP1375 / SS120).